The sequence spans 323 residues: Beta-ketoacyl-[acyl-carrier-protein] synthase III (323 aa).

Residues cysteine 114 and histidine 250 contribute to the active site. An ACP-binding region spans residues glutamine 251–arginine 255. Residue asparagine 280 is part of the active site.

This sequence belongs to the thiolase-like superfamily. FabH family. As to quaternary structure, homodimer.

It localises to the cytoplasm. The enzyme catalyses malonyl-[ACP] + acetyl-CoA + H(+) = 3-oxobutanoyl-[ACP] + CO2 + CoA. It participates in lipid metabolism; fatty acid biosynthesis. Its function is as follows. Catalyzes the condensation reaction of fatty acid synthesis by the addition to an acyl acceptor of two carbons from malonyl-ACP. Catalyzes the first condensation reaction which initiates fatty acid synthesis and may therefore play a role in governing the total rate of fatty acid production. Possesses both acetoacetyl-ACP synthase and acetyl transacylase activities. Its substrate specificity determines the biosynthesis of branched-chain and/or straight-chain of fatty acids. The chain is Beta-ketoacyl-[acyl-carrier-protein] synthase III from Cereibacter sphaeroides (strain ATCC 17029 / ATH 2.4.9) (Rhodobacter sphaeroides).